The primary structure comprises 940 residues: Fibronectin-binding protein B (940 aa).

Residues 1–36 (MKSNLRYGIRKHKLGAASVFLGTMIVVGMGQEKEAA) form the signal peptide. Residues 36–111 (AASEQNNTTV…PKVETSRVDL (76 aa)) form a disordered region. Residues 38 to 92 (SEQNNTTVEESGSSATESKASETQTTTNNVNTIDETQSYSATSTEQPSQSTQVTT) are compositionally biased toward polar residues. Residues 162–480 (TGTDVTNKVE…AQGDGKDKLK (319 aa)) are fibrinogen/elastin/tropoelastin-binding. Disordered stretches follow at residues 676–746 (LGYE…NIID), 764–878 (IIEE…GKVV), and 892–918 (VPTK…NGML). Residues 681–718 (GQNSGNQSFEEDTEEDKPKYEQGGNIVDIDFDSVPQIH) form a D-1 repeat. Residues 719–756 (GQNNGNQSFEEDTEKDKPKYEQGGNIIDIDFDSVPHIH) form a D-2 repeat. The stretch at 757–795 (GFNKHTEIIEEDTNKDKPNYQFGGHNSVDFEEDTLPQVS) is one D-3 repeat. Over residues 764–774 (IIEEDTNKDKP) the composition is skewed to basic and acidic residues. Residues 792–802 (PQVSGHNEGQQ) show a composition bias toward polar residues. The D-4; truncated repeat unit spans residues 796–814 (GHNEGQQTIEEDTTPPIVP). The segment covering 811-860 (PIVPPTPPTPEVPSEPETPTPPTPEVPSEPETPTPPTPEVPTEPGKPIPP) has biased composition (pro residues). 3 WR repeats span residues 815–828 (PTPP…EPET), 829–842 (PTPP…EPET), and 857–870 (PIPP…KPSK). The short motif at 904–908 (LPETG) is the LPXTG sorting signal element. Thr907 is subject to Pentaglycyl murein peptidoglycan amidated threonine. A propeptide spans 908 to 940 (GGEESTNNGMLFGGLFSILGLALLRRNKKNHKA) (removed by sortase).

Interacts with host PLG; this interaction provides active plasmin on the surface of bacteria cells. Interacts with host histones.

The protein resides in the secreted. It is found in the cell wall. In terms of biological role, multifunctional protein which promotes bacterial attachment to fibrinogen, elastin and fibronectin. Also promotes the accumulation phase and the primary attachment phase of biofilm formation. In addition, protects against the antimicrobial activity of histones. Mechanistically, captures histones and prevents them from reaching the bacterial membrane and simultaneously binds plasminogen, thereby promoting its conversion to plasmin to destroy the bound histones. This is Fibronectin-binding protein B from Staphylococcus aureus (strain USA300).